Reading from the N-terminus, the 200-residue chain is Small ribosomal subunit protein uS4 (200 aa).

In terms of domain architecture, S4 RNA-binding spans 92–155 (SRLDAVVYSL…QKLNVIVESV (64 aa)).

The protein belongs to the universal ribosomal protein uS4 family. In terms of assembly, part of the 30S ribosomal subunit. Contacts protein S5. The interaction surface between S4 and S5 is involved in control of translational fidelity.

Functionally, one of the primary rRNA binding proteins, it binds directly to 16S rRNA where it nucleates assembly of the body of the 30S subunit. With S5 and S12 plays an important role in translational accuracy. This chain is Small ribosomal subunit protein uS4, found in Staphylococcus aureus (strain MRSA252).